The sequence spans 303 residues: Sulfotransferase 6B1 (303 aa).

65-70 serves as a coordination point for 3'-phosphoadenylyl sulfate; it reads KCGSNW. The active-site Proton acceptor is the H118. Residues R140, S148, Y203, 237–242, and 259–261 contribute to the 3'-phosphoadenylyl sulfate site; these read STFLAM and RKG.

This sequence belongs to the sulfotransferase 1 family. Expressed in brain, heart, kidney, thymus, lung, liver and testis.

It localises to the cytoplasm. The protein localises to the cytosol. The enzyme catalyses thyroxine + 3'-phosphoadenylyl sulfate = thyroxine sulfate + adenosine 3',5'-bisphosphate + H(+). Its function is as follows. Sulfotransferase that utilizes 3'-phospho-5'-adenylyl sulfate (PAPS) as sulfonate donor to catalyze the sulfate conjugation of thyroxine. Involved in the metabolism of thyroxine. This chain is Sulfotransferase 6B1 (Sult6b1), found in Mus musculus (Mouse).